The sequence spans 164 residues: Kunitz-type trypsin inhibitor BrTI (164 aa).

It belongs to the leguminous Kunitz-type inhibitor family.

Functionally, inhibitor of trypsin and human plasma kallikrein with a Ki of 2.9 nM and 14.0 nM, respectively. Does not inhibit chymotrypsin, porcine pancreatic elastas, human neutrophil elastase, coagulation factor Xa, human thrombin, porcine pancreatic kallikrein or plasmin. In Bauhinia rufa (Orchid tree), this protein is Kunitz-type trypsin inhibitor BrTI.